The sequence spans 131 residues: Small ribosomal subunit protein uS8 (131 aa).

It belongs to the universal ribosomal protein uS8 family. As to quaternary structure, part of the 30S ribosomal subunit. Contacts proteins S5 and S12.

One of the primary rRNA binding proteins, it binds directly to 16S rRNA central domain where it helps coordinate assembly of the platform of the 30S subunit. This Alkalilimnicola ehrlichii (strain ATCC BAA-1101 / DSM 17681 / MLHE-1) protein is Small ribosomal subunit protein uS8.